The primary structure comprises 274 residues: Thiamine kinase (274 aa).

Belongs to the thiamine kinase family.

The enzyme catalyses thiamine + ATP = thiamine phosphate + ADP + H(+). Its pathway is cofactor biosynthesis; thiamine diphosphate biosynthesis; thiamine phosphate from thiamine: step 1/1. In terms of biological role, catalyzes the ATP-dependent phosphorylation of thiamine to thiamine phosphate. Is involved in thiamine salvage. The polypeptide is Thiamine kinase (Salmonella heidelberg (strain SL476)).